The sequence spans 319 residues: MSLNFLDFEQPIAELEAKIDSLTAVSRQDEKLDINIDEEVHRLREKSVELTRKIFADLGAWQVAQLARHPQRPYTLDYVRLAFDEFDELAGDRAYADDKAIVGGIARLEGRPVMVIGHQKGRETKEKIRRNFGMPAPEGYRKALRLMEMAERFNMPIITFIDTPGAYPGVGAEERGQSEAIARNLREMSRLNVPIICTVIGEGGSGGALAIGVGDKVNMLQYSTYSVISPEGCASILWKSADKAPLAAEAMGIIAPRLKELKLIDSIIPEPLGGAHRNPEVMAASLKAQLLEDLADLDVLSTDDLKNRRYQRLMSYGYA.

Residues 35 to 296 enclose the CoA carboxyltransferase C-terminal domain; sequence NIDEEVHRLR…KAQLLEDLAD (262 aa).

It belongs to the AccA family. In terms of assembly, acetyl-CoA carboxylase is a heterohexamer composed of biotin carboxyl carrier protein (AccB), biotin carboxylase (AccC) and two subunits each of ACCase subunit alpha (AccA) and ACCase subunit beta (AccD).

It is found in the cytoplasm. The catalysed reaction is N(6)-carboxybiotinyl-L-lysyl-[protein] + acetyl-CoA = N(6)-biotinyl-L-lysyl-[protein] + malonyl-CoA. Its pathway is lipid metabolism; malonyl-CoA biosynthesis; malonyl-CoA from acetyl-CoA: step 1/1. Its function is as follows. Component of the acetyl coenzyme A carboxylase (ACC) complex. First, biotin carboxylase catalyzes the carboxylation of biotin on its carrier protein (BCCP) and then the CO(2) group is transferred by the carboxyltransferase to acetyl-CoA to form malonyl-CoA. The protein is Acetyl-coenzyme A carboxylase carboxyl transferase subunit alpha of Salmonella arizonae (strain ATCC BAA-731 / CDC346-86 / RSK2980).